The following is a 201-amino-acid chain: Cutinase (201 aa).

A signal peptide spans 1–20 (MKTSAQQLLSLLLLPLSAIA). A disulfide bond links Cys31 and Cys105. The active-site Nucleophile is the Ser116. A disulfide bridge connects residues Cys164 and Cys171. Residue Asp168 is part of the active site. His181 functions as the Proton donor/acceptor in the catalytic mechanism.

This sequence belongs to the cutinase family. In terms of processing, the 2 disulfide bonds play a critical role in holding the catalytic residues in juxta-position; reduction of the disulfide bridges results in the complete inactivation of the enzyme.

It is found in the secreted. The enzyme catalyses cutin + H2O = cutin monomers.. In terms of biological role, catalyzes the hydrolysis of complex carboxylic polyesters found in the cell wall of plants. Degrades cutin, a macromolecule that forms the structure of the plant cuticle. Allows pathogenic fungi to penetrate through the cuticular barrier into the host plant during the initial stage of fungal infection. This Monilinia fructicola (Brown rot fungus) protein is Cutinase (CUT1).